Consider the following 343-residue polypeptide: Ketol-acid reductoisomerase (NADP(+)) (343 aa).

Residues 7-186 (TTVYYDEDAD…GCTRAGVIET (180 aa)) form the KARI N-terminal Rossmann domain. NADP(+) contacts are provided by residues 30-33 (YGSQ), Arg-53, Ser-56, Ser-58, and 88-91 (DTIQ). Residue His-112 is part of the active site. Residue Gly-138 participates in NADP(+) binding. Residues 187–329 (SFQEEVETDL…ENLRELFAWG (143 aa)) enclose the KARI C-terminal knotted domain. Mg(2+)-binding residues include Asp-195, Glu-199, Glu-231, and Glu-235. Residue Ser-256 coordinates substrate.

It belongs to the ketol-acid reductoisomerase family. The cofactor is Mg(2+).

It carries out the reaction (2R)-2,3-dihydroxy-3-methylbutanoate + NADP(+) = (2S)-2-acetolactate + NADPH + H(+). It catalyses the reaction (2R,3R)-2,3-dihydroxy-3-methylpentanoate + NADP(+) = (S)-2-ethyl-2-hydroxy-3-oxobutanoate + NADPH + H(+). The protein operates within amino-acid biosynthesis; L-isoleucine biosynthesis; L-isoleucine from 2-oxobutanoate: step 2/4. Its pathway is amino-acid biosynthesis; L-valine biosynthesis; L-valine from pyruvate: step 2/4. Its function is as follows. Involved in the biosynthesis of branched-chain amino acids (BCAA). Catalyzes an alkyl-migration followed by a ketol-acid reduction of (S)-2-acetolactate (S2AL) to yield (R)-2,3-dihydroxy-isovalerate. In the isomerase reaction, S2AL is rearranged via a Mg-dependent methyl migration to produce 3-hydroxy-3-methyl-2-ketobutyrate (HMKB). In the reductase reaction, this 2-ketoacid undergoes a metal-dependent reduction by NADPH to yield (R)-2,3-dihydroxy-isovalerate. The sequence is that of Ketol-acid reductoisomerase (NADP(+)) from Haloarcula marismortui (strain ATCC 43049 / DSM 3752 / JCM 8966 / VKM B-1809) (Halobacterium marismortui).